Here is a 602-residue protein sequence, read N- to C-terminus: T-box transcription factor TBX15 (602 aa).

Residues 43–95 (SMEALSPAGPLGDTDDPATHGLEPHPDSEQSTGSDSEVLTERTSCSFSTHTDL) are disordered. Positions 71 to 94 (EQSTGSDSEVLTERTSCSFSTHTD) are enriched in polar residues. The T-box DNA-binding region spans 122–304 (LWKRFHDIGT…RNPFAKGFRD (183 aa)). Threonine 330 carries the phosphothreonine modification. Disordered stretches follow at residues 338 to 369 (QKQQGGSTGTSPTTSSTGTPSPSASSHLLSPS) and 425 to 444 (QSGTASATQPSETFMPQRTP). Residues 346–369 (GTSPTTSSTGTPSPSASSHLLSPS) show a composition bias toward low complexity.

Can form a heterodimer with TBX18.

Its subcellular location is the nucleus. Its function is as follows. Probable transcriptional regulator involved in the development of the skeleton of the limb, vertebral column and head. Acts by controlling the number of mesenchymal precursor cells and chondrocytes. The chain is T-box transcription factor TBX15 (Tbx15) from Mus musculus (Mouse).